The primary structure comprises 173 residues: CASP-like protein 2D1 (173 aa).

The Cytoplasmic segment spans residues 1–9 (MAPLLKLLD). Residues 10 to 29 (SSLRVSVIPLSAATIWLTVT) form a helical membrane-spanning segment. Residues 30 to 50 (NHQDNSSYGNLKYSNIMGLKY) are Extracellular-facing. N-linked (GlcNAc...) asparagine glycosylation is present at N34. A helical transmembrane segment spans residues 51-71 (MVCISAICASYAFVAAVSIWI). Residues 72–86 (KCLVNKVWLFFVSDQ) lie on the Cytoplasmic side of the membrane. Residues 87–107 (IIAYLMVTSVAAAMEILYIAY) form a helical membrane-spanning segment. Over 108–131 (NGDQKVTWSEACTSYGKFCNGMKT) the chain is Extracellular. A helical membrane pass occupies residues 132–152 (ALILHALTLCFFIVLAVISAY). Residues 153-173 (RAFSMYQPPVSSKETVEGDAT) lie on the Cytoplasmic side of the membrane.

Belongs to the Casparian strip membrane proteins (CASP) family. As to quaternary structure, homodimer and heterodimers.

The protein resides in the cell membrane. The protein is CASP-like protein 2D1 of Ricinus communis (Castor bean).